A 293-amino-acid chain; its full sequence is Acetyl-coenzyme A carboxylase carboxyl transferase subunit beta (293 aa).

Positions 29-293 (LWVKCSECSQ…GVKELAEANI (265 aa)) constitute a CoA carboxyltransferase N-terminal domain. C33, C36, C52, and C55 together coordinate Zn(2+). The C4-type zinc-finger motif lies at 33–55 (CSECSQVAYRKDLISNFNVCSNC).

Belongs to the AccD/PCCB family. In terms of assembly, acetyl-CoA carboxylase is a heterohexamer composed of biotin carboxyl carrier protein (AccB), biotin carboxylase (AccC) and two subunits each of ACCase subunit alpha (AccA) and ACCase subunit beta (AccD). Zn(2+) is required as a cofactor.

The protein resides in the cytoplasm. The catalysed reaction is N(6)-carboxybiotinyl-L-lysyl-[protein] + acetyl-CoA = N(6)-biotinyl-L-lysyl-[protein] + malonyl-CoA. It participates in lipid metabolism; malonyl-CoA biosynthesis; malonyl-CoA from acetyl-CoA: step 1/1. Functionally, component of the acetyl coenzyme A carboxylase (ACC) complex. Biotin carboxylase (BC) catalyzes the carboxylation of biotin on its carrier protein (BCCP) and then the CO(2) group is transferred by the transcarboxylase to acetyl-CoA to form malonyl-CoA. The protein is Acetyl-coenzyme A carboxylase carboxyl transferase subunit beta of Prochlorococcus marinus (strain MIT 9312).